A 200-amino-acid polypeptide reads, in one-letter code: ATP synthase subunit s, mitochondrial (200 aa).

Residues 1–25 (MMMFGKISRQLFSLKKIPWSCDSRY) constitute a mitochondrion transit peptide. The interval 1–61 (MMMFGKISRQ…SEWLLRCGAK (61 aa)) is N-terminal domain. Gly-59 is a binding site for Mg(2+). 4 LRR repeats span residues 62 to 87 (VRYC…RYKI), 88 to 116 (QAID…RITL), 117 to 141 (CRCH…KSLL), and 142 to 173 (ELEI…LSDL). Thr-93 lines the Mg(2+) pocket.

This sequence belongs to the ATP synthase subunit s family. Homotetramer. Associates with ATP synthase.

It is found in the mitochondrion. It localises to the mitochondrion inner membrane. Its function is as follows. Involved in regulation of mitochondrial membrane ATP synthase. Necessary for H(+) conduction of ATP synthase. Facilitates energy-driven catalysis of ATP synthesis by blocking a proton leak through an alternative proton exit pathway. This Rattus norvegicus (Rat) protein is ATP synthase subunit s, mitochondrial.